The chain runs to 177 residues: R-phycoerythrin beta chain (177 aa).

2 residues coordinate (2R,3E)-phycoerythrobilin: N35 and D39. The phycourobilin site is built by C50, D54, and C61. Residues N72, R77–R78, C82, and R84–D85 each bind (2R,3E)-phycoerythrobilin. N4-methylasparagine is present on N72. S147–Q148 is a binding site for phycourobilin. (2R,3E)-phycoerythrobilin is bound by residues I154 and C158.

This sequence belongs to the phycobiliprotein family. Heterododecamer of 6 alpha and 6 beta chains. The basic functional unit of phycobiliproteins is a ring-shaped hexamer formed from two back-to-back trimers contacting via the alpha chain subunits. The trimers are composed of alpha/beta subunit heterodimers arranged around a three-fold axis of symmetry. The phycoerythrins also contain a gamma subunit which is located in the center of the hexamer. In terms of processing, contains two covalently linked phycoerythrobilin chromophores and one covalently linked phycourobilin chromophore.

Its subcellular location is the plastid. The protein localises to the chloroplast thylakoid membrane. In terms of biological role, light-harvesting photosynthetic tetrapyrrole chromophore-protein from the phycobiliprotein complex. This is R-phycoerythrin beta chain (rpeB) from Agarophyton chilense (Red seaweed).